The sequence spans 226 residues: Thymidylate kinase (226 aa).

16–23 (GIDGAGKT) contacts ATP.

The protein belongs to the thymidylate kinase family.

The catalysed reaction is dTMP + ATP = dTDP + ADP. Phosphorylation of dTMP to form dTDP in both de novo and salvage pathways of dTTP synthesis. In Xanthomonas euvesicatoria pv. vesicatoria (strain 85-10) (Xanthomonas campestris pv. vesicatoria), this protein is Thymidylate kinase.